Consider the following 488-residue polypeptide: Ribulose bisphosphate carboxylase large chain 1 (488 aa).

Substrate is bound by residues N128 and T178. K180 functions as the Proton acceptor in the catalytic mechanism. K182 is a binding site for substrate. Residues K206, D208, and E209 each coordinate Mg(2+). At K206 the chain carries N6-carboxylysine. Residue H298 is the Proton acceptor of the active site. Residues R299, H331, and S383 each contribute to the substrate site.

Belongs to the RuBisCO large chain family. Type I subfamily. In terms of assembly, heterohexadecamer of 8 large chains and 8 small chains. It depends on Mg(2+) as a cofactor.

The enzyme catalyses 2 (2R)-3-phosphoglycerate + 2 H(+) = D-ribulose 1,5-bisphosphate + CO2 + H2O. The catalysed reaction is D-ribulose 1,5-bisphosphate + O2 = 2-phosphoglycolate + (2R)-3-phosphoglycerate + 2 H(+). RuBisCO catalyzes two reactions: the carboxylation of D-ribulose 1,5-bisphosphate, the primary event in carbon dioxide fixation, as well as the oxidative fragmentation of the pentose substrate. Both reactions occur simultaneously and in competition at the same active site. The protein is Ribulose bisphosphate carboxylase large chain 1 of Methylibium petroleiphilum (strain ATCC BAA-1232 / LMG 22953 / PM1).